Consider the following 620-residue polypeptide: Ferric/cupric reductase transmembrane component 7 (620 aa).

At 1–45 (MIEERDLVLSNGIHCIADIHSELYARLKKESQAVTPWVYQKQYGK) the chain is on the extracellular side. A helical membrane pass occupies residues 46-66 (FVTYFVAVIIFLSLIKKLAFM). Topologically, residues 67–107 (YYDSSEEFLPEKKNSPTTPSVFLARIMTKLVAFNRYICYRK) are cytoplasmic. Residues 108 to 128 (FPTLIFSYLGIPTSVGTFLVV) traverse the membrane as a helical segment. Topologically, residues 129-167 (MATTLYTLLYCFVPHPFYRPCAGFGSPPLSVRAGIMAIS) are extracellular. The Ferric oxidoreductase domain maps to 161 to 320 (AGIMAISLVS…LAVKGYLRPG (160 aa)). The helical transmembrane segment at 168–188 (LVSFVFSLSGKINVIGWLVGL) threads the bilayer. At 189–194 (SYEKIN) the chain is on the cytoplasmic side. A helical transmembrane segment spans residues 195–215 (IYHQWASILCLFFSWVHVIPF). Residues His197 and His211 each coordinate heme. At 216-237 (LRQARHEGGYERMHQRWKASDM) the chain is on the extracellular side. The helical transmembrane segment at 238-258 (WRSGVPPILFLNLLWLSSLPI) threads the bilayer. Residues 259–265 (ARRHFYE) lie on the Cytoplasmic side of the membrane. Residues 266–286 (IFLQLHWILAVGFYISLFYHV) form a helical membrane-spanning segment. Heme-binding residues include His271 and His285. At 287–292 (YPELNS) the chain is on the extracellular side. Residues 293–313 (HMYLVATIVVWFAQLFYRLAV) traverse the membrane as a helical segment. Residues 314–620 (KGYLRPGRSF…CYLHSESFGY (307 aa)) are Cytoplasmic-facing. Positions 321–419 (RSFMASTIAN…DGPYGGIERD (99 aa)) constitute an FAD-binding FR-type domain. Residue 369–375 (HPFSIFP) coordinates FAD. A disordered region spans residues 519–544 (SDQSDLAKREKDTEFGQDDTESNSTF). Basic and acidic residues predominate over residues 523–532 (DLAKREKDTE).

Belongs to the ferric reductase (FRE) family. FAD serves as cofactor.

It is found in the cell membrane. The catalysed reaction is 2 a Fe(II)-siderophore + NADP(+) + H(+) = 2 a Fe(III)-siderophore + NADPH. Its function is as follows. Cell surface metalloreductase. May be involved in copper homeostasis. The chain is Ferric/cupric reductase transmembrane component 7 (FRE7) from Saccharomyces cerevisiae (strain YJM789) (Baker's yeast).